The chain runs to 438 residues: Trigger factor (438 aa).

The 86-residue stretch at 160–245 folds into the PPIase FKBP-type domain; it reads DDKVVIDFVG…VKKIQEAQLP (86 aa).

The protein belongs to the FKBP-type PPIase family. Tig subfamily.

The protein resides in the cytoplasm. It catalyses the reaction [protein]-peptidylproline (omega=180) = [protein]-peptidylproline (omega=0). Functionally, involved in protein export. Acts as a chaperone by maintaining the newly synthesized protein in an open conformation. Functions as a peptidyl-prolyl cis-trans isomerase. The polypeptide is Trigger factor (Francisella philomiragia subsp. philomiragia (strain ATCC 25017 / CCUG 19701 / FSC 153 / O#319-036)).